Consider the following 129-residue polypeptide: Small ribosomal subunit protein uS8 (129 aa).

This sequence belongs to the universal ribosomal protein uS8 family. In terms of assembly, part of the 30S ribosomal subunit.

One of the primary rRNA binding proteins, it binds directly to 16S rRNA central domain where it helps coordinate assembly of the platform of the 30S subunit. In Methanothrix thermoacetophila (strain DSM 6194 / JCM 14653 / NBRC 101360 / PT) (Methanosaeta thermophila), this protein is Small ribosomal subunit protein uS8.